Here is a 389-residue protein sequence, read N- to C-terminus: Stilbene synthase 3 (389 aa).

55–58 (KFQR) provides a ligand contact to substrate. C164 is a catalytic residue. Residues L267 and 305 to 307 (GGR) contribute to the substrate site.

Belongs to the thiolase-like superfamily. Chalcone/stilbene synthases family. As to quaternary structure, homodimer.

The protein localises to the cytoplasm. It carries out the reaction 4-coumaroyl-CoA + 3 malonyl-CoA + 3 H(+) = trans-resveratrol + 4 CO2 + 4 CoA. The protein operates within phytoalexin biosynthesis; 3,4',5-trihydroxystilbene biosynthesis; 3,4',5-trihydroxystilbene from trans-4-coumarate: step 2/2. The sequence is that of Stilbene synthase 3 from Arachis hypogaea (Peanut).